A 24-amino-acid chain; its full sequence is 12 kDa protein (24 aa).

The chain is 12 kDa protein from Mycolicibacterium smegmatis (Mycobacterium smegmatis).